Reading from the N-terminus, the 77-residue chain is Apelin (77 aa).

The signal sequence occupies residues methionine 1–alanine 22. Positions serine 21 to phenylalanine 77 are disordered. Over residues glycine 59–histidine 71 the composition is skewed to basic residues.

This sequence belongs to the apelin family.

Its subcellular location is the secreted. The protein localises to the extracellular space. Its function is as follows. Peptide hormone that functions as endogenous ligand for the G-protein-coupled apelin receptor (aplnra and/or aplnrb), that plays a role in cadiovascular homeostasis. Functions as a balanced agonist activating both G(i) protein pathway and beta-arrestin pathway of APLNR. Downstream G proteins activation, apelin can inhibit cAMP production and activate key intracellular effectors such as ERKs. On the other hand, APLNR activation induces beta-arrestin recruitment to the membrane leading to desensitization and internalization of the receptor. Apelin blunts cardiac hypertrophic induction from APLNR on response to pathological stimuli, but also induces myocardial hypertrophy under normal conditions. Involved in the regulation of cardiac precursor cell movements during gastrulation and heart morphogenesis. Plays a role in early coronary blood vessels formation. Mediates myocardial contractility in an ERK1/2-dependent manner. May also have a role in the central control of body fluid homeostasis. The polypeptide is Apelin (Danio rerio (Zebrafish)).